The primary structure comprises 269 residues: Tryptophan synthase alpha chain (269 aa).

Residues glutamate 49 and aspartate 60 each act as proton acceptor in the active site.

Belongs to the TrpA family. In terms of assembly, tetramer of two alpha and two beta chains.

It carries out the reaction (1S,2R)-1-C-(indol-3-yl)glycerol 3-phosphate + L-serine = D-glyceraldehyde 3-phosphate + L-tryptophan + H2O. Its pathway is amino-acid biosynthesis; L-tryptophan biosynthesis; L-tryptophan from chorismate: step 5/5. The alpha subunit is responsible for the aldol cleavage of indoleglycerol phosphate to indole and glyceraldehyde 3-phosphate. The chain is Tryptophan synthase alpha chain from Actinobacillus pleuropneumoniae serotype 7 (strain AP76).